Consider the following 257-residue polypeptide: Diacetyl reductase [(S)-acetoin forming] (257 aa).

6 to 30 (IITGSAGGLGKGIAERLANDGFNIV) is a binding site for NAD(+). Ser139 provides a ligand contact to substrate. Tyr152 serves as the catalytic Proton acceptor. The active site involves Lys156.

This sequence belongs to the short-chain dehydrogenases/reductases (SDR) family.

It catalyses the reaction (S)-acetoin + NAD(+) = diacetyl + NADH + H(+). In terms of biological role, catalyzes the irreversible reduction of 2,3-butanediol to (S)-acetoin in the presence of NADH. The polypeptide is Diacetyl reductase [(S)-acetoin forming] (butA) (Staphylococcus epidermidis (strain ATCC 35984 / DSM 28319 / BCRC 17069 / CCUG 31568 / BM 3577 / RP62A)).